Consider the following 287-residue polypeptide: ATP synthase gamma chain (287 aa).

The protein belongs to the ATPase gamma chain family. As to quaternary structure, F-type ATPases have 2 components, CF(1) - the catalytic core - and CF(0) - the membrane proton channel. CF(1) has five subunits: alpha(3), beta(3), gamma(1), delta(1), epsilon(1). CF(0) has three main subunits: a, b and c.

It localises to the cell inner membrane. Functionally, produces ATP from ADP in the presence of a proton gradient across the membrane. The gamma chain is believed to be important in regulating ATPase activity and the flow of protons through the CF(0) complex. The chain is ATP synthase gamma chain from Colwellia maris.